Here is a 354-residue protein sequence, read N- to C-terminus: Bergaptol O-methyltransferase (354 aa).

H121 contacts bergaptol. S-adenosyl-L-homocysteine is bound by residues S174, G198, D221, and K255. H259 lines the bergaptol pocket. H259 serves as the catalytic Proton acceptor.

It belongs to the class I-like SAM-binding methyltransferase superfamily. Cation-independent O-methyltransferase family. COMT subfamily.

It catalyses the reaction a 5-hydroxyfurocoumarin + S-adenosyl-L-methionine = a 5-methoxyfurocoumarin + S-adenosyl-L-homocysteine + H(+). The enzyme catalyses bergaptol + S-adenosyl-L-methionine = bergapten + S-adenosyl-L-homocysteine. Its activity is regulated as follows. Inhibited by Cu(2+), Ni(2+) and Co(2+). This Ammi majus (Bishop's weed) protein is Bergaptol O-methyltransferase.